A 949-amino-acid chain; its full sequence is Coiled-coil domain-containing protein 80 (949 aa).

An N-terminal signal peptide occupies residues 1 to 27 (MTWKMGPHFTMLLAMWLVCGSASQSSA). 3 disordered regions span residues 24 to 79 (QSSA…RRKS), 289 to 360 (HVVQ…ATRA), and 408 to 609 (GPSV…SPRK). The span at 295–305 (NNGGGGGGSTG) shows a compositional bias: gly residues. Residues 308 to 328 (SDKRKEDPRRTQIHPTREPPR) show a composition bias toward basic and acidic residues. The segment covering 345 to 360 (RATTLPPAPVTTATRA) has biased composition (low complexity). The segment covering 419-429 (PRKEQQREKPQ) has biased composition (basic and acidic residues). A compositionally biased stretch (polar residues) spans 436–453 (KATNYGSFTATPPTTLWE). A compositionally biased stretch (basic and acidic residues) spans 463-477 (RFRDNRTDKREHGHQ). N-linked (GlcNAc...) asparagine glycosylation occurs at Asn-467. A compositionally biased stretch (basic residues) spans 487–498 (KPIKGKLPKKKE). Basic and acidic residues-rich tracts occupy residues 499–511 (KILS…KYDL), 534–548 (KESK…PEKE), and 556–581 (AKPD…EKEK). Glycyl lysine isopeptide (Lys-Gly) (interchain with G-Cter in SUMO2) cross-links involve residues Lys-544 and Lys-547. A coiled-coil region spans residues 559–587 (DKLLRSEKQMKKAEKKSKQEKEKTKKKKA).

This sequence belongs to the CCDC80 family. As to quaternary structure, binds to various extracellular matrix proteins. Phosphorylated. In terms of tissue distribution, isoform 2 is expressed in uterus, liver, lung, spleen, kidney, heart, bladder, skeletal muscle and brain (at protein level). Isoform 2 is expressed very low in mammary gland and intestine (at protein level). Isoform 2 is expressed in lactating mammary glands and mammary tumors (at protein level). Ubiquitous (isoform 1). Isoform 2 is expressed in ovary, uterus, mammary glands, liver, lung, spleen, kidney, heart, bladder, intestine, skeletal muscle and brain.

It localises to the secreted. Its subcellular location is the extracellular space. It is found in the extracellular matrix. Its function is as follows. Promotes cell adhesion and matrix assembly. This is Coiled-coil domain-containing protein 80 (Ccdc80) from Rattus norvegicus (Rat).